Consider the following 380-residue polypeptide: Cytochrome b (380 aa).

Helical transmembrane passes span 33-53 (FGSL…FLAM), 77-98 (WLIR…YLHV), 113-133 (WNIG…GYVL), and 178-198 (FFAF…IHLL). Residues histidine 83 and histidine 97 each coordinate heme b. Heme b contacts are provided by histidine 182 and histidine 196. Histidine 201 serves as a coordination point for a ubiquinone. Transmembrane regions (helical) follow at residues 226-246 (YKDL…ALFS), 288-308 (LGGV…PMLH), 320-340 (PSQI…WIGG), and 347-367 (FVLI…IALP).

The protein belongs to the cytochrome b family. The cytochrome bc1 complex contains 3 respiratory subunits (MT-CYB, CYC1 and UQCRFS1), 2 core proteins (UQCRC1 and UQCRC2) and probably 6 low-molecular weight proteins. It depends on heme b as a cofactor.

Its subcellular location is the mitochondrion inner membrane. In terms of biological role, component of the ubiquinol-cytochrome c reductase complex (complex III or cytochrome b-c1 complex) that is part of the mitochondrial respiratory chain. The b-c1 complex mediates electron transfer from ubiquinol to cytochrome c. Contributes to the generation of a proton gradient across the mitochondrial membrane that is then used for ATP synthesis. The polypeptide is Cytochrome b (mt-cyb) (Acipenser sinensis (Chinese sturgeon)).